The sequence spans 329 residues: GMP reductase (329 aa).

Cysteine 178 (thioimidate intermediate) is an active-site residue. An NADP(+)-binding site is contributed by 207 to 230; it reads VIADGGIRTHGDVAKSIRMGATMV.

It belongs to the IMPDH/GMPR family. GuaC type 2 subfamily.

The catalysed reaction is IMP + NH4(+) + NADP(+) = GMP + NADPH + 2 H(+). Functionally, catalyzes the irreversible NADPH-dependent deamination of GMP to IMP. It functions in the conversion of nucleobase, nucleoside and nucleotide derivatives of G to A nucleotides, and in maintaining the intracellular balance of A and G nucleotides. This chain is GMP reductase, found in Lactococcus lactis subsp. cremoris (strain MG1363).